We begin with the raw amino-acid sequence, 189 residues long: Cell division protein SepF (189 aa).

Disordered regions lie at residues 1–75 (MEGQ…GLPG) and 155–174 (STPSSQGMPPLQRPLQSPTP).

It belongs to the SepF family. Homodimer. Interacts with FtsZ.

It localises to the cytoplasm. Cell division protein that is part of the divisome complex and is recruited early to the Z-ring. Probably stimulates Z-ring formation, perhaps through the cross-linking of FtsZ protofilaments. Its function overlaps with FtsA. This is Cell division protein SepF from Synechococcus sp. (strain JA-3-3Ab) (Cyanobacteria bacterium Yellowstone A-Prime).